The sequence spans 123 residues: Small ribosomal subunit protein uS12cz/uS12cy (123 aa).

It belongs to the universal ribosomal protein uS12 family. As to quaternary structure, part of the 30S ribosomal subunit.

It is found in the plastid. The protein localises to the chloroplast. With S4 and S5 plays an important role in translational accuracy. Located at the interface of the 30S and 50S subunits. The chain is Small ribosomal subunit protein uS12cz/uS12cy (rps12-A) from Psilotum nudum (Whisk fern).